We begin with the raw amino-acid sequence, 303 residues long: Glutamate formimidoyltransferase (303 aa).

His81 (for formimidoyltransferase activity) is an active-site residue. Position 164–172 (Gly164–Gly172) interacts with folate.

It belongs to the formiminotransferase family.

It localises to the cytoplasm. The enzyme catalyses (6S)-5-formyl-5,6,7,8-tetrahydrofolate + L-glutamate = N-formyl-L-glutamate + (6S)-5,6,7,8-tetrahydrofolate + H(+). It carries out the reaction 5-formimidoyltetrahydrofolate + L-glutamate = N-formimidoyl-L-glutamate + (6S)-5,6,7,8-tetrahydrofolate. The catalysed reaction is (6S)-5-formyl-5,6,7,8-tetrahydrofolate + ATP = (6R)-5,10-methenyltetrahydrofolate + ADP + phosphate. Its pathway is amino-acid degradation; L-histidine degradation into L-glutamate; L-glutamate from N-formimidoyl-L-glutamate (transferase route): step 1/1. It functions in the pathway one-carbon metabolism; tetrahydrofolate interconversion. Its function is as follows. Catalyzes the transfer of the formyl group from N-formylglutamate to tetrahydrofolate (THF) to yield 5-formyltetrahydrofolate (5-CHO-THF) and glutamate (Glu). The triglutamate form of 5-CHO-THF (5-CHO-THF-Glu3) can also be used as substrate. It can also catalyze the transfer of the formimino group from N-formiminoglutamate to tetrahydrofolate (THF) to yield 5-formiminotetrahydrofolate (5-NH=CH-THF) and glutamate (Glu). It can replace YgfA to catalyze the irreversible ATP-dependent transformation of 5-CHO-THF to form 5,10-methenyltetrahydrofolate (5,10-CH=THF). The polypeptide is Glutamate formimidoyltransferase (Thermoplasma acidophilum (strain ATCC 25905 / DSM 1728 / JCM 9062 / NBRC 15155 / AMRC-C165)).